The chain runs to 321 residues: Ribosomal RNA small subunit methyltransferase H (321 aa).

Residues 33 to 35 (AGH), Asp58, Phe85, Asp111, and Gln118 each bind S-adenosyl-L-methionine.

Belongs to the methyltransferase superfamily. RsmH family.

The protein resides in the cytoplasm. It catalyses the reaction cytidine(1402) in 16S rRNA + S-adenosyl-L-methionine = N(4)-methylcytidine(1402) in 16S rRNA + S-adenosyl-L-homocysteine + H(+). Specifically methylates the N4 position of cytidine in position 1402 (C1402) of 16S rRNA. The chain is Ribosomal RNA small subunit methyltransferase H from Chloroherpeton thalassium (strain ATCC 35110 / GB-78).